The following is a 155-amino-acid chain: UPF0178 protein Amet_2995 (155 aa).

It belongs to the UPF0178 family.

In Alkaliphilus metalliredigens (strain QYMF), this protein is UPF0178 protein Amet_2995.